Here is a 258-residue protein sequence, read N- to C-terminus: Envelope glycoprotein L (258 aa).

An N-terminal signal peptide occupies residues 1 to 31 (MYECMFFSHRLTIGFYIPLIVLTTMSSLSES). Residues 36 to 243 (QKTACTVAAI…ILYQASLSGP (208 aa)) form the gL betaherpesvirus-type domain. A disulfide bridge links Cys-145 with Cys-150.

The protein belongs to the herpesviridae glycoprotein L (gL) family. Betaherpesvirinae gL subfamily. Interacts with glycoprotein H (gH); this interaction is necessary for the correct processing and cell surface expression of gH. Forms the envelope pentamer complex (PC) composed of gH, gL, UL128, UL130, and UL131A. The pentamer interacts with host NRP2. Forms the envelope trimer complex composed of gH, gL, and gO. The trimer interacts with host PDGFRA.

Its subcellular location is the virion membrane. The protein localises to the host cell membrane. It localises to the host Golgi apparatus. The protein resides in the host trans-Golgi network. Its function is as follows. The heterodimer glycoprotein H-glycoprotein L is required for the fusion of viral and plasma membranes leading to virus entry into the host cell. Acts as a functional inhibitor of gH and maintains gH in an inhibited form. Upon binding to host integrins, gL dissociates from gH leading to activation of the viral fusion glycoproteins gB and gH. In human cytomegalovirus, forms two distincts complexes to mediate viral entry, a trimer and a pentamer at the surface of the virion envelope. The gH-gL-gO trimer is required for infection in fibroblasts by interacting with host PDGFRA. The gH-gL-UL128-UL130-UL131A pentamer is essential for viral entry in epithelial, endothelial and myeloid cells via interaction with host NRP2. The sequence is that of Envelope glycoprotein L from Guinea pig cytomegalovirus (strain 22122) (GPCMV).